The primary structure comprises 1102 residues: MELENYEQPVVLREDNRRRRRRMKPRSTAASLSSMELIPIEFVLPTSQRNTKTPETALLHVAGHGNVEQMKAQVWLRALETSVSADFYHRLGPDHFLLLYQKKGQWYEIYDKYQVVQTLDCLRYWKVLHRSPGQIHVVQRHAPSEETLAFQRQLNALIGYDVTDVSNVHDDELEFTRRRLVTPRMAEVAGRDPKLYAMHPWVTSKPLPEYLLKKITNNCVFIVIHRSTTSQTIKVSADDTPGTILQSFFTKMAKKKSLMDIPESQNERDFVLRVCGRDEYLVGETPIKNFQWVRQCLKNGEEIHLVLDTPPDPALDEVRKEEWPLVDDCTGVTGYHEQLTIHGKDHESVFTVSLWDCDRKFRVKIRGIDIPVLPRTADLTVFVEANIQYGQQVLCQRRTSPKPFTEEVLWNVWLEFSIKIKDLPKGALLNLQIYCGKAPALSGKTSAEMPSPESKGKAQLLYYVNLLLIDHRFLLRHGEYVLHMWQLSGKGEDQGSFNADKLTSRTNPDKENSMSISILLDNYCHPIALPKHRPTPDPEGDRVRAEMPNQLRKQLEAIIATDPLNPLTAEDKELLWHFRYESLKDPKAYPKLFSSVKWGQQEIVAKTYQLLAKREVWDQSALDVGLTMQLLDCNFSDENVRAIAVQKLESLEDDDVLHYLLQLVQAVKFEPYHDSALARFLLKRGLRNKRIGHFLFWFLRSEIAQSRHYQQRFAVILEAYLRGCGTAMLHDFTQQVQVIDMLQKVTIDIKSLSAEKYDVSSQVISQLKQKLENLQNLNLPQSFRVPYDPGLKAGALVIEKCKVMASKKKPLWLEFKCADPTALSNETIGIIFKHGDDLRQDMLILQILRIMESIWETESLDLCLLPYGCISTGDKIGMIEIVKDATTIAKIQQSTVGNTGAFKDEVLSHWLKEKCPIEEKFQAAVERFVYSCAGYCVATFVLGIGDRHNDNIMISETGNLFHIDFGHILGNYKSFLGINKERVPFVLTPDFLFVMGTSGKKTSLHFQKFQDVCVKAYLALRHHTNLLIILFSMMLMTGMPQLTSKEDIEYIRDALTVGKSEEDAKKYFLDQIEVCRDKGWTVQFNWFLHLVLGIKQGEKHSA.

The PI3K-ABD domain maps to 34 to 141 (SMELIPIEFV…PGQIHVVQRH (108 aa)). Residues 217–309 (NNCVFIVIHR…GEEIHLVLDT (93 aa)) enclose the PI3K-RBD domain. One can recognise a C2 PI3K-type domain in the interval 357–521 (CDRKFRVKIR…NSMSISILLD (165 aa)). The PIK helical domain maps to 541-723 (DRVRAEMPNQ…AVILEAYLRG (183 aa)). Positions 797–1080 (VIEKCKVMAS…QIEVCRDKGW (284 aa)) constitute a PI3K/PI4K catalytic domain. The tract at residues 803 to 809 (VMASKKK) is G-loop. ATP contacts are provided by residues 829 to 838 (GIIFKHGDDL) and 864 to 872 (LLPYGCIST). Residues 943–951 (GIGDRHNDN) form a catalytic loop region. Position 961-969 (961-969 (FHIDFGHIL)) interacts with ATP. The segment at 962 to 988 (HIDFGHILGNYKSFLGINKERVPFVLT) is activation loop. At threonine 1024 the chain carries Phosphothreonine; by PKA. Position 1101 is a phosphoserine; by autocatalysis (serine 1101).

This sequence belongs to the PI3/PI4-kinase family. As to quaternary structure, heterodimer of a catalytic subunit PIK3CG and a PIK3R5 or PIK3R6 regulatory subunit. Interacts with GRK2 through the PIK helical domain. Interaction with GRK2 is required for targeting to agonist-occupied receptor. Interacts with PDE3B; regulates PDE3B activity and thereby cAMP levels in cells. Interacts with TPM2. Interacts with EPHA8; regulates integrin-mediated cell adhesion to substrate. Interacts with HRAS; the interaction is required for membrane recruitment and beta-gamma G protein dimer-dependent activation of the PI3K gamma complex PIK3CG:PIK3R6. Post-translationally, autophosphorylation at Ser-1101 has no effect on the phosphatidylinositol-4,5-bisphosphate 3-kinase activity.

Its subcellular location is the cytoplasm. The protein resides in the cell membrane. It carries out the reaction a 1,2-diacyl-sn-glycero-3-phospho-(1D-myo-inositol-4,5-bisphosphate) + ATP = a 1,2-diacyl-sn-glycero-3-phospho-(1D-myo-inositol-3,4,5-trisphosphate) + ADP + H(+). It catalyses the reaction a 1,2-diacyl-sn-glycero-3-phospho-(1D-myo-inositol) + ATP = a 1,2-diacyl-sn-glycero-3-phospho-(1D-myo-inositol-3-phosphate) + ADP + H(+). The enzyme catalyses a 1,2-diacyl-sn-glycero-3-phospho-(1D-myo-inositol 4-phosphate) + ATP = a 1,2-diacyl-sn-glycero-3-phospho-(1D-myo-inositol-3,4-bisphosphate) + ADP + H(+). The catalysed reaction is L-seryl-[protein] + ATP = O-phospho-L-seryl-[protein] + ADP + H(+). The protein operates within phospholipid metabolism; phosphatidylinositol phosphate biosynthesis. Activated by both the alpha and the beta-gamma G proteins following stimulation of G protein-coupled receptors (GPCRs). Activation by GPCRs is assisted by the regulatory subunits (PIK3R5 or PIK3R6) leading to the translocation from the cytosol to the plasma membrane and to kinase activation. When bound to PIK3R5 the PI3K activity of PIK3CG could be activated greater than 100-fold by the beta-gamma G proteins. In terms of biological role, phosphoinositide-3-kinase (PI3K) that phosphorylates PtdIns(4,5)P2 (Phosphatidylinositol 4,5-bisphosphate) to generate phosphatidylinositol 3,4,5-trisphosphate (PIP3). PIP3 plays a key role by recruiting PH domain-containing proteins to the membrane, including AKT1 and PDPK1, activating signaling cascades involved in cell growth, survival, proliferation, motility and morphology. Links G-protein coupled receptor activation to PIP3 production. Involved in immune, inflammatory and allergic responses. Modulates leukocyte chemotaxis to inflammatory sites and in response to chemoattractant agents. May control leukocyte polarization and migration by regulating the spatial accumulation of PIP3 and by regulating the organization of F-actin formation and integrin-based adhesion at the leading edge. Controls motility of dendritic cells. Participates in T-lymphocyte migration. Regulates T-lymphocyte proliferation and cytokine production. Required for B-lymphocyte development and signaling. Together with other PI3Ks are involved in the oxidative burst produced by neutrophils in response to chemotactic agents. Together with PIK3CD regulate neutrophil extravasation. Together with PIK3CB promotes platelet aggregation and thrombosis. Regulates alpha-IIb/beta-3 integrins (ITGA2B/ ITGB3) adhesive function in platelets downstream of P2Y12 through a lipid kinase activity-independent mechanism. May have also a lipid kinase activity-dependent function in platelet aggregation. Involved in endothelial progenitor cell migration. Negative regulator of cardiac contractility. Modulates cardiac contractility by anchoring protein kinase A (PKA) and PDE3B activation, reducing cAMP levels. Regulates cardiac contractility also by promoting beta-adrenergic receptor internalization by binding to GRK2 and by non-muscle tropomyosin phosphorylation. Also has serine/threonine protein kinase activity: both lipid and protein kinase activities are required for beta-adrenergic receptor endocytosis. May also have a scaffolding role in modulating cardiac contractility. Contribute to cardiac hypertrophy under pathological stress. Through simultaneous binding of PDE3B to RAPGEF3 and PIK3R6 is assembled in a signaling complex in which the PI3K gamma complex is activated by RAPGEF3 and which is involved in angiogenesis. In neutrophils, participates in a phospholipase C-activating N-formyl peptide-activated GPCR (G protein-coupled receptor) signaling pathway downstream of RASGRP4-mediated Ras-activation, to promote neutrophil functional responses. In Sus scrofa (Pig), this protein is Phosphatidylinositol 4,5-bisphosphate 3-kinase catalytic subunit gamma isoform (PIK3CG).